Consider the following 308-residue polypeptide: Ribosomal RNA large subunit methyltransferase F (308 aa).

It belongs to the methyltransferase superfamily. METTL16/RlmF family.

It localises to the cytoplasm. The catalysed reaction is adenosine(1618) in 23S rRNA + S-adenosyl-L-methionine = N(6)-methyladenosine(1618) in 23S rRNA + S-adenosyl-L-homocysteine + H(+). In terms of biological role, specifically methylates the adenine in position 1618 of 23S rRNA. The polypeptide is Ribosomal RNA large subunit methyltransferase F (Salmonella arizonae (strain ATCC BAA-731 / CDC346-86 / RSK2980)).